A 315-amino-acid polypeptide reads, in one-letter code: Methionyl-tRNA formyltransferase (315 aa).

A (6S)-5,6,7,8-tetrahydrofolate-binding site is contributed by 114–117; sequence SLLP.

This sequence belongs to the Fmt family.

It carries out the reaction L-methionyl-tRNA(fMet) + (6R)-10-formyltetrahydrofolate = N-formyl-L-methionyl-tRNA(fMet) + (6S)-5,6,7,8-tetrahydrofolate + H(+). Attaches a formyl group to the free amino group of methionyl-tRNA(fMet). The formyl group appears to play a dual role in the initiator identity of N-formylmethionyl-tRNA by promoting its recognition by IF2 and preventing the misappropriation of this tRNA by the elongation apparatus. The protein is Methionyl-tRNA formyltransferase of Corynebacterium efficiens (strain DSM 44549 / YS-314 / AJ 12310 / JCM 11189 / NBRC 100395).